The primary structure comprises 291 residues: 3-hydroxy-5-phosphonooxypentane-2,4-dione thiolase (291 aa).

Lys203 acts as the Schiff-base intermediate with substrate in catalysis.

This sequence belongs to the DeoC/FbaB aldolase family. As to quaternary structure, homodecamer.

The protein localises to the cytoplasm. It catalyses the reaction dihydroxyacetone phosphate + acetyl-CoA = 3-hydroxy-2,4-dioxopentyl phosphate + CoA. Involved in the degradation of phospho-AI-2, thereby terminating induction of the lsr operon and closing the AI-2 signaling cycle. Catalyzes the transfer of an acetyl moiety from 3-hydroxy-5-phosphonooxypentane-2,4-dione to CoA to form glycerone phosphate and acetyl-CoA. This chain is 3-hydroxy-5-phosphonooxypentane-2,4-dione thiolase, found in Escherichia coli O139:H28 (strain E24377A / ETEC).